The following is a 458-amino-acid chain: Phosphoglucosamine mutase (458 aa).

Ser-106 (phosphoserine intermediate) is an active-site residue. Residues Ser-106, Asp-247, Asp-249, and Asp-251 each contribute to the Mg(2+) site. At Ser-106 the chain carries Phosphoserine.

This sequence belongs to the phosphohexose mutase family. Mg(2+) serves as cofactor. Activated by phosphorylation.

It carries out the reaction alpha-D-glucosamine 1-phosphate = D-glucosamine 6-phosphate. In terms of biological role, catalyzes the conversion of glucosamine-6-phosphate to glucosamine-1-phosphate. In Chlamydia caviae (strain ATCC VR-813 / DSM 19441 / 03DC25 / GPIC) (Chlamydophila caviae), this protein is Phosphoglucosamine mutase.